The following is a 209-amino-acid chain: Kynurenine formamidase (209 aa).

A substrate-binding site is contributed by W19. Zn(2+) contacts are provided by H49, H53, and D55. Residue H59 is the Proton donor/acceptor of the active site. Residues H160 and E172 each contribute to the Zn(2+) site.

Belongs to the Cyclase 1 superfamily. KynB family. As to quaternary structure, homodimer. Zn(2+) is required as a cofactor.

The catalysed reaction is N-formyl-L-kynurenine + H2O = L-kynurenine + formate + H(+). The protein operates within amino-acid degradation; L-tryptophan degradation via kynurenine pathway; L-kynurenine from L-tryptophan: step 2/2. Its function is as follows. Catalyzes the hydrolysis of N-formyl-L-kynurenine to L-kynurenine, the second step in the kynurenine pathway of tryptophan degradation. This is Kynurenine formamidase from Ralstonia nicotianae (strain ATCC BAA-1114 / GMI1000) (Ralstonia solanacearum).